A 172-amino-acid chain; its full sequence is Histone H1-like protein HC2 (172 aa).

The tract at residues 1-77 is disordered; the sequence is MIGAQKKQSG…TVAKKPAVKK (77 aa). Over residues 8-77 the composition is skewed to basic residues; that stretch reads QSGKKTASRA…TVAKKPAVKK (70 aa).

This sequence belongs to the histone H1/H5 family. HCT subfamily.

Functionally, might have a role in establishing the nucleoid structure of elementary bodies. The sequence is that of Histone H1-like protein HC2 (hctB) from Chlamydia pneumoniae (Chlamydophila pneumoniae).